The sequence spans 231 residues: Two-component response regulator ORR1 (231 aa).

In terms of domain architecture, Response regulatory spans 9–135 (RVLLVDDSPV…DVQRLRNCSP (127 aa)). Asp-68 is modified (4-aspartylphosphate).

The protein belongs to the ARR family. Type-A subfamily. Post-translationally, two-component system major event consists of a His-to-Asp phosphorelay between a sensor histidine kinase (HK) and a response regulator (RR). In plants, the His-to-Asp phosphorelay involves an additional intermediate named Histidine-containing phosphotransfer protein (HPt). This multistep phosphorelay consists of a His-Asp-His-Asp sequential transfer of a phosphate group between first a His and an Asp of the HK protein, followed by the transfer to a conserved His of the HPt protein and finally the transfer to an Asp in the receiver domain of the RR protein. As to expression, expressed in roots, leaf blades, leaf sheaths, shoot apex, flowers and panicles.

Its function is as follows. Functions as a response regulator involved in His-to-Asp phosphorelay signal transduction system. Phosphorylation of the Asp residue in the receiver domain activates the ability of the protein to promote the transcription of target genes. Type-A response regulators seem to act as negative regulators of the cytokinin signaling. Involved in adventitious (crown) root initiation under the regulation of CRL5. The protein is Two-component response regulator ORR1 of Oryza sativa subsp. japonica (Rice).